A 242-amino-acid polypeptide reads, in one-letter code: Small ribosomal subunit protein uS2 (242 aa).

Belongs to the universal ribosomal protein uS2 family.

This Tolumonas auensis (strain DSM 9187 / NBRC 110442 / TA 4) protein is Small ribosomal subunit protein uS2.